A 184-amino-acid chain; its full sequence is Peptidyl-tRNA hydrolase (184 aa).

Tyrosine 14 provides a ligand contact to tRNA. Histidine 19 functions as the Proton acceptor in the catalytic mechanism. Positions 64, 66, and 112 each coordinate tRNA.

This sequence belongs to the PTH family. In terms of assembly, monomer.

The protein localises to the cytoplasm. The enzyme catalyses an N-acyl-L-alpha-aminoacyl-tRNA + H2O = an N-acyl-L-amino acid + a tRNA + H(+). In terms of biological role, hydrolyzes ribosome-free peptidyl-tRNAs (with 1 or more amino acids incorporated), which drop off the ribosome during protein synthesis, or as a result of ribosome stalling. Its function is as follows. Catalyzes the release of premature peptidyl moieties from peptidyl-tRNA molecules trapped in stalled 50S ribosomal subunits, and thus maintains levels of free tRNAs and 50S ribosomes. In Listeria welshimeri serovar 6b (strain ATCC 35897 / DSM 20650 / CCUG 15529 / CIP 8149 / NCTC 11857 / SLCC 5334 / V8), this protein is Peptidyl-tRNA hydrolase.